We begin with the raw amino-acid sequence, 570 residues long: Proline--tRNA ligase (570 aa).

This sequence belongs to the class-II aminoacyl-tRNA synthetase family. ProS type 1 subfamily. Homodimer.

It is found in the cytoplasm. The enzyme catalyses tRNA(Pro) + L-proline + ATP = L-prolyl-tRNA(Pro) + AMP + diphosphate. In terms of biological role, catalyzes the attachment of proline to tRNA(Pro) in a two-step reaction: proline is first activated by ATP to form Pro-AMP and then transferred to the acceptor end of tRNA(Pro). As ProRS can inadvertently accommodate and process non-cognate amino acids such as alanine and cysteine, to avoid such errors it has two additional distinct editing activities against alanine. One activity is designated as 'pretransfer' editing and involves the tRNA(Pro)-independent hydrolysis of activated Ala-AMP. The other activity is designated 'posttransfer' editing and involves deacylation of mischarged Ala-tRNA(Pro). The misacylated Cys-tRNA(Pro) is not edited by ProRS. In Thermoanaerobacter sp. (strain X514), this protein is Proline--tRNA ligase.